A 218-amino-acid chain; its full sequence is Large ribosomal subunit protein mL54 (218 aa).

Belongs to the mitochondrion-specific ribosomal protein mL54 family. Component of the mitochondrial large ribosomal subunit (mt-LSU). Mature N.crassa 74S mitochondrial ribosomes consist of a small (37S) and a large (54S) subunit. The 37S small subunit contains a 16S ribosomal RNA (16S mt-rRNA) and 32 different proteins. The 54S large subunit contains a 23S rRNA (23S mt-rRNA) and 42 different proteins.

It localises to the mitochondrion. Component of the mitochondrial ribosome (mitoribosome), a dedicated translation machinery responsible for the synthesis of mitochondrial genome-encoded proteins, including at least some of the essential transmembrane subunits of the mitochondrial respiratory chain. The mitoribosomes are attached to the mitochondrial inner membrane and translation products are cotranslationally integrated into the membrane. The chain is Large ribosomal subunit protein mL54 (mrpl37) from Neurospora crassa (strain ATCC 24698 / 74-OR23-1A / CBS 708.71 / DSM 1257 / FGSC 987).